We begin with the raw amino-acid sequence, 138 residues long: MAKYIPKTGSRKNVRIGSRNHTRKIPKGIIHVQASFNNTIVTITDVRGRVISWSSAGTCGFKGTRRGTPFAAQTAAGNAIRTVSDQGMQRAEIMIKGPGLGRDAALRAIRRSGILLNFIRDVTPMPHNGCRSPKKRRV.

Belongs to the universal ribosomal protein uS11 family. In terms of assembly, part of the 30S ribosomal subunit.

The protein localises to the plastid. It localises to the chloroplast. The chain is Small ribosomal subunit protein uS11c from Phaseolus vulgaris (Kidney bean).